Reading from the N-terminus, the 123-residue chain is Large ribosomal subunit protein bL12 (123 aa).

Belongs to the bacterial ribosomal protein bL12 family. In terms of assembly, homodimer. Part of the ribosomal stalk of the 50S ribosomal subunit. Forms a multimeric L10(L12)X complex, where L10 forms an elongated spine to which 2 to 4 L12 dimers bind in a sequential fashion. Binds GTP-bound translation factors.

Forms part of the ribosomal stalk which helps the ribosome interact with GTP-bound translation factors. Is thus essential for accurate translation. This chain is Large ribosomal subunit protein bL12, found in Neisseria perflava.